Here is a 455-residue protein sequence, read N- to C-terminus: Phosphoglucosamine mutase (455 aa).

Ser-108 functions as the Phosphoserine intermediate in the catalytic mechanism. Mg(2+) contacts are provided by Ser-108, Asp-248, Asp-250, and Asp-252. At Ser-108 the chain carries Phosphoserine.

The protein belongs to the phosphohexose mutase family. Requires Mg(2+) as cofactor. Activated by phosphorylation.

It catalyses the reaction alpha-D-glucosamine 1-phosphate = D-glucosamine 6-phosphate. Functionally, catalyzes the conversion of glucosamine-6-phosphate to glucosamine-1-phosphate. The protein is Phosphoglucosamine mutase of Leuconostoc mesenteroides subsp. mesenteroides (strain ATCC 8293 / DSM 20343 / BCRC 11652 / CCM 1803 / JCM 6124 / NCDO 523 / NBRC 100496 / NCIMB 8023 / NCTC 12954 / NRRL B-1118 / 37Y).